Consider the following 346-residue polypeptide: ATP-dependent 6-phosphofructokinase (346 aa).

Residues Gly-13, 76-77, and 106-109 each bind ATP; these read RL and GEGT. Glu-107 contributes to the Mg(2+) binding site. Substrate-binding positions include 129–131, Arg-166, 173–175, Glu-226, Arg-270, and 276–279; these read TID, MGR, and HIQR. The active-site Proton acceptor is the Asp-131.

It belongs to the phosphofructokinase type A (PFKA) family. Mixed-substrate PFK group III subfamily. Homodimer or homotetramer. It depends on Mg(2+) as a cofactor.

The protein resides in the cytoplasm. The enzyme catalyses beta-D-fructose 6-phosphate + ATP = beta-D-fructose 1,6-bisphosphate + ADP + H(+). It functions in the pathway carbohydrate degradation; glycolysis; D-glyceraldehyde 3-phosphate and glycerone phosphate from D-glucose: step 3/4. Functionally, catalyzes the phosphorylation of D-fructose 6-phosphate to fructose 1,6-bisphosphate by ATP, the first committing step of glycolysis. The protein is ATP-dependent 6-phosphofructokinase of Corynebacterium efficiens (strain DSM 44549 / YS-314 / AJ 12310 / JCM 11189 / NBRC 100395).